A 221-amino-acid chain; its full sequence is Phosphoglycolate phosphatase (221 aa).

The active-site Nucleophile is the D7. Residues D7 and D9 each contribute to the Mg(2+) site. Position 148 (K148) interacts with substrate. Residues D171 and D175 each coordinate Mg(2+).

This sequence belongs to the archaeal SPP-like hydrolase family. The cofactor is Mg(2+).

The enzyme catalyses 2-phosphoglycolate + H2O = glycolate + phosphate. Catalyzes the dephosphorylation of 2-phosphoglycolate. The chain is Phosphoglycolate phosphatase from Methanothermobacter thermautotrophicus (strain ATCC 29096 / DSM 1053 / JCM 10044 / NBRC 100330 / Delta H) (Methanobacterium thermoautotrophicum).